Consider the following 79-residue polypeptide: Small ribosomal subunit protein bS18 (79 aa).

The protein belongs to the bacterial ribosomal protein bS18 family. As to quaternary structure, part of the 30S ribosomal subunit. Forms a tight heterodimer with protein bS6.

In terms of biological role, binds as a heterodimer with protein bS6 to the central domain of the 16S rRNA, where it helps stabilize the platform of the 30S subunit. This Micrococcus luteus (strain ATCC 4698 / DSM 20030 / JCM 1464 / CCM 169 / CCUG 5858 / IAM 1056 / NBRC 3333 / NCIMB 9278 / NCTC 2665 / VKM Ac-2230) (Micrococcus lysodeikticus) protein is Small ribosomal subunit protein bS18.